The chain runs to 1012 residues: Isoleucine--tRNA ligase, mitochondrial (1012 aa).

Residues 1 to 48 (MHWGLCPRGPGAAAVAAAGSFWGPARLPSRLGCLGMTRRLVVRSVAGA) constitute a mitochondrion transit peptide. K56 carries the N6-succinyllysine modification. Position 74 is an N6-acetyllysine; alternate (K74). An N6-succinyllysine; alternate modification is found at K74. The 'HIGH' region signature appears at 116 to 126 (PYANGDPHVGH). K194 carries the N6-succinyllysine modification. An N6-acetyllysine modification is found at K233. K241 carries the N6-acetyllysine; alternate modification. An N6-succinyllysine; alternate modification is found at K241. An N6-succinyllysine mark is found at K479 and K500. ATP-binding residues include K664 and K667. The 'KMSKS' region signature appears at 664–668 (KMSKS). N6-acetyllysine is present on K725. Residues K775 and K781 each carry the N6-acetyllysine; alternate modification. 2 positions are modified to N6-succinyllysine; alternate: K775 and K781.

The protein belongs to the class-I aminoacyl-tRNA synthetase family.

It is found in the mitochondrion matrix. It carries out the reaction tRNA(Ile) + L-isoleucine + ATP = L-isoleucyl-tRNA(Ile) + AMP + diphosphate. Aminoacyl-tRNA synthetase that catalyzes the specific attachment of isoleucine to its cognate tRNA (tRNA(Ile)). The protein is Isoleucine--tRNA ligase, mitochondrial of Mus musculus (Mouse).